A 664-amino-acid chain; its full sequence is Methionine--tRNA ligase (664 aa).

The short motif at 13–23 (PYTNGPCHLGH) is the 'HIGH' region element. Cys-144, Cys-147, Cys-156, and Cys-160 together coordinate Zn(2+). The short motif at 327–331 (KFSKS) is the 'KMSKS' region element. An ATP-binding site is contributed by Lys-330. A tRNA-binding domain is found at 566 to 664 (EFAKVEMKTG…TPVPSGTKIR (99 aa)).

Belongs to the class-I aminoacyl-tRNA synthetase family. MetG type 1 subfamily. Homodimer. Zn(2+) serves as cofactor.

It is found in the cytoplasm. It carries out the reaction tRNA(Met) + L-methionine + ATP = L-methionyl-tRNA(Met) + AMP + diphosphate. Is required not only for elongation of protein synthesis but also for the initiation of all mRNA translation through initiator tRNA(fMet) aminoacylation. This Methanospirillum hungatei JF-1 (strain ATCC 27890 / DSM 864 / NBRC 100397 / JF-1) protein is Methionine--tRNA ligase.